The following is a 159-amino-acid chain: Cathelicidin-5 (159 aa).

Residues 1 to 29 form the signal peptide; that stretch reads METQRASLSLGRWSLWLLLLGLALPSASA. Gln-30 carries the post-translational modification Pyrrolidone carboxylic acid. Residues 30 to 131 constitute a propeptide that is removed on maturation; that stretch reads QALSYREAVL…DITCAVPQSV (102 aa). 2 disulfide bridges follow: Cys-86/Cys-97 and Cys-108/Cys-125.

Belongs to the cathelicidin family.

It is found in the secreted. In terms of biological role, exerts a potent antimicrobial activity against Gram-negative and Gram-positive bacteria, including methicillin-resistant Staphylococcus aureus, and fungi. This Bos taurus (Bovine) protein is Cathelicidin-5 (CATHL5).